The primary structure comprises 419 residues: Phosphatidylcholine:ceramide cholinephosphotransferase 1 (419 aa).

The region spanning 13–76 is the SAM domain; that stretch reads WSPKKVADWL…LDMIETLKME (64 aa). A Phosphoserine modification is found at serine 14. The next 5 membrane-spanning stretches (helical) occupy residues 142 to 162, 190 to 210, 221 to 241, 282 to 302, and 310 to 330; these read LLAF…ISVV, FSIC…QWLL, FFCI…VTTL, MCGD…YLFI, and LWWY…CILL. Residue histidine 291 is part of the active site. At 331–419 the chain is on the cytoplasmic side; sequence AHDHYTVDVV…VKYSRLVNDT (89 aa). Catalysis depends on residues histidine 334 and aspartate 338.

This sequence belongs to the sphingomyelin synthase family.

It localises to the golgi apparatus membrane. It carries out the reaction an N-acylsphing-4-enine + a 1,2-diacyl-sn-glycero-3-phosphocholine = a sphingomyelin + a 1,2-diacyl-sn-glycerol. The catalysed reaction is 1-(9Z-octadecenoyl)-2-acyl-sn-3-glycerol + a sphingomyelin = a 1-(9Z-octadecenoyl)-2-acyl-sn-glycero-3-phosphocholine + an N-acylsphing-4-enine. The enzyme catalyses N-hexadecanoylsphinganine + a 1,2-diacyl-sn-glycero-3-phosphocholine = N-hexadecanoyl-sphinganine-1-phosphocholine + a 1,2-diacyl-sn-glycerol. It catalyses the reaction N-hexadecanoyl-(4R)-hydroxysphinganine + a 1,2-diacyl-sn-glycero-3-phosphocholine = N-hexadecanoyl-(4R)-hydroxysphinganine-phosphocholine + a 1,2-diacyl-sn-glycerol. It carries out the reaction an N-acylsphing-4-enine + a 1,2-diacyl-sn-glycero-3-phosphoethanolamine = an N-acylsphing-4-enine 1-phosphoethanolamine + a 1,2-diacyl-sn-glycerol. It participates in sphingolipid metabolism. Functionally, major sphingomyelin synthase at the Golgi apparatus. Catalyzes the reversible transfer of phosphocholine moiety in sphingomyelin biosynthesis: in the forward reaction transfers phosphocholine head group of phosphatidylcholine (PC) on to ceramide (CER) to form ceramide phosphocholine (sphingomyelin, SM) and diacylglycerol (DAG) as by-product, and in the reverse reaction transfers phosphocholine from SM to DAG to form PC and CER. The direction of the reaction depends on the levels of CER and DAG in Golgi membranes. Converts the newly synthesized CER, that is transported from the endoplasmic reticulum to the trans-Golgi by the Cer transport protein (CERT), to SM. Can form a heteromeric complex with glucosylceramide synthase (GCS) increasing SMS activity and reducing glucosylceramide synthesis, a critical mechanism that controls the metabolic fate of CER in the Golgi. Does not use free phosphorylcholine or CDP-choline as donor. Can also transfer phosphoethanolamine head group of phosphatidylethanolamine (PE) on to CER to form ceramide phosphoethanolamine (CPE). Regulates receptor-mediated signal transduction via mitogenic DAG and proapoptotic CER, as well as via SM, a structural component of membrane rafts that serve as platforms for signal transduction and protein sorting. Plays a role in secretory transport via regulation of DAG pool at the Golgi apparatus and its downstream effects on PRKD1. This is Phosphatidylcholine:ceramide cholinephosphotransferase 1 (Sgms1) from Rattus norvegicus (Rat).